We begin with the raw amino-acid sequence, 501 residues long: Putative BTB/POZ domain-containing protein L107 (501 aa).

Positions 16 to 87 constitute a BTB domain; sequence TDLELTLVDS…FYITDIERSQ (72 aa).

This sequence belongs to the mimivirus BTB/WD family.

The chain is Putative BTB/POZ domain-containing protein L107 from Acanthamoeba polyphaga mimivirus (APMV).